Here is an 821-residue protein sequence, read N- to C-terminus: Probable E3 ubiquitin-protein ligase hulA (821 aa).

In terms of domain architecture, C2 spans 1-112 (MGSNLPAQPN…QMGGDEMLTR (112 aa)). Disordered regions lie at residues 140 to 240 (PNQA…WERR) and 255 to 359 (RTTT…YFVD). Composition is skewed to polar residues over residues 151 to 173 (AQSS…SVSP), 181 to 201 (AASN…PTST), 217 to 228 (QGSRTNLSSFED), and 255 to 272 (RTTT…QTQR). One can recognise a WW 1 domain in the interval 231 to 264 (GRLPAGWERREDNLGRTYYVDHNTRTTTWTRPSS). The span at 281–296 (LERRAHQSRMLPEDRT) shows a compositional bias: basic and acidic residues. Positions 297–306 (GANSPNLQES) are enriched in polar residues. The span at 311 to 339 (PQQAHTPPAGGSASAVSMMATGATTAGTG) shows a compositional bias: low complexity. WW domains are found at residues 339-372 (GELP…DPRR) and 399-432 (GPLP…DPRL). The region spanning 488-821 (SASDLKKRLM…VEETLGFGQE (334 aa)) is the HECT domain. Residue Cys-789 is the Glycyl thioester intermediate of the active site.

The protein belongs to the RSP5/NEDD4 family. As to quaternary structure, interacts with creD.

The protein localises to the cytoplasm. The catalysed reaction is S-ubiquitinyl-[E2 ubiquitin-conjugating enzyme]-L-cysteine + [acceptor protein]-L-lysine = [E2 ubiquitin-conjugating enzyme]-L-cysteine + N(6)-ubiquitinyl-[acceptor protein]-L-lysine.. It functions in the pathway protein modification; protein ubiquitination. In terms of biological role, E3 ubiquitin-protein ligase which accepts ubiquitin from an E2 ubiquitin-conjugating enzyme in the form of a thioester and then directly transfers the ubiquitin to targeted substrates. Probably involved in the regulatory network controlling carbon source utilization. The chain is Probable E3 ubiquitin-protein ligase hulA (hulA) from Aspergillus niger (strain ATCC MYA-4892 / CBS 513.88 / FGSC A1513).